A 666-amino-acid polypeptide reads, in one-letter code: Transketolase (666 aa).

Residue His-28 coordinates substrate. Thiamine diphosphate is bound by residues His-68 and 116-118 (GPL). Asp-157 contacts Mg(2+). Thiamine diphosphate contacts are provided by Gly-158 and Asn-187. The Mg(2+) site is built by Asn-187 and Ile-189. Positions 262, 356, and 383 each coordinate substrate. His-262 provides a ligand contact to thiamine diphosphate. Glu-410 (proton donor) is an active-site residue. Phe-436 contributes to the thiamine diphosphate binding site. Residues His-460, Asp-468, and Arg-519 each contribute to the substrate site.

Belongs to the transketolase family. In terms of assembly, homodimer. Mg(2+) is required as a cofactor. It depends on Ca(2+) as a cofactor. Requires Mn(2+) as cofactor. The cofactor is Co(2+). Thiamine diphosphate serves as cofactor.

The enzyme catalyses D-sedoheptulose 7-phosphate + D-glyceraldehyde 3-phosphate = aldehydo-D-ribose 5-phosphate + D-xylulose 5-phosphate. In terms of biological role, catalyzes the transfer of a two-carbon ketol group from a ketose donor to an aldose acceptor, via a covalent intermediate with the cofactor thiamine pyrophosphate. The protein is Transketolase (tkt) of Halalkalibacterium halodurans (strain ATCC BAA-125 / DSM 18197 / FERM 7344 / JCM 9153 / C-125) (Bacillus halodurans).